The sequence spans 195 residues: Protein GrpE (195 aa).

Belongs to the GrpE family. Homodimer.

The protein resides in the cytoplasm. Participates actively in the response to hyperosmotic and heat shock by preventing the aggregation of stress-denatured proteins, in association with DnaK and GrpE. It is the nucleotide exchange factor for DnaK and may function as a thermosensor. Unfolded proteins bind initially to DnaJ; upon interaction with the DnaJ-bound protein, DnaK hydrolyzes its bound ATP, resulting in the formation of a stable complex. GrpE releases ADP from DnaK; ATP binding to DnaK triggers the release of the substrate protein, thus completing the reaction cycle. Several rounds of ATP-dependent interactions between DnaJ, DnaK and GrpE are required for fully efficient folding. The protein is Protein GrpE of Blochmanniella pennsylvanica (strain BPEN).